Here is a 415-residue protein sequence, read N- to C-terminus: Ankyrin repeat domain-containing protein 10 (415 aa).

ANK repeat units lie at residues 20–49 (SLRF…RAHL), 56–85 (YGWT…SLNV), 90–119 (YAQT…NINK), and 123–152 (EGET…HTDL). The segment covering 303–325 (TGSNGVSNGQPLSSGQASVSANG) has biased composition (polar residues). A disordered region spans residues 303 to 330 (TGSNGVSNGQPLSSGQASVSANGTEEPE).

The chain is Ankyrin repeat domain-containing protein 10 (Ankrd10) from Mus musculus (Mouse).